The following is a 203-amino-acid chain: MRILIQFTKRHPWLTNVTIYGSLFASADIVQQKLSKSPTEPIDFKQTAKVGLVGFCFHANFNFFWLRFIERTFPGSAPLNVIRKVACDQLMAAPITISAFYTGLSLLDGERDVFKNLKEKFWPTYKTGVMCWTVFQTINFSVIPPFVRTAYIGVCAFLWTTFLCYIRNRDINEVTTRLLHAVPNIRGKMAFPQDQDDNKPADK.

The Cytoplasmic portion of the chain corresponds to 1–12; that stretch reads MRILIQFTKRHP. The chain crosses the membrane as a helical span at residues 13 to 30; that stretch reads WLTNVTIYGSLFASADIV. At 31-49 the chain is on the lumenal side; that stretch reads QQKLSKSPTEPIDFKQTAK. A helical membrane pass occupies residues 50-69; sequence VGLVGFCFHANFNFFWLRFI. The Cytoplasmic segment spans residues 70 to 89; it reads ERTFPGSAPLNVIRKVACDQ. Residues 90-107 traverse the membrane as a helical segment; sequence LMAAPITISAFYTGLSLL. At 108-143 the chain is on the lumenal side; sequence DGERDVFKNLKEKFWPTYKTGVMCWTVFQTINFSVI. A helical membrane pass occupies residues 144 to 166; it reads PPFVRTAYIGVCAFLWTTFLCYI. Residues 167–203 are Cytoplasmic-facing; it reads RNRDINEVTTRLLHAVPNIRGKMAFPQDQDDNKPADK.

This sequence belongs to the peroxisomal membrane protein PXMP2/4 family.

It is found in the peroxisome membrane. Functionally, participates in reactive oxygen species metabolism by up- or down-regulation of the genes of antioxidant enzymes. Protective against the mitochondrial apoptotic cascade. In Xenopus laevis (African clawed frog), this protein is Mpv17-like protein (mpv17l).